Here is a 395-residue protein sequence, read N- to C-terminus: Prostaglandin D2 receptor 2 (395 aa).

Residues 1–33 lie on the Extracellular side of the membrane; it reads MSANATLKPLCPILEQMSRLQSHSNTSIRYIDH. Residues Asn4 and Asn25 are each glycosylated (N-linked (GlcNAc...) asparagine). The helical transmembrane segment at 34-56 threads the bilayer; the sequence is AAVLLHGLASLLGLVENGVILFV. At 57-67 the chain is on the cytoplasmic side; the sequence is VGCRMRQTVVT. The chain crosses the membrane as a helical span at residues 68-89; that stretch reads TWVLHLALSDLLASASLPFFTY. Residues 90–106 lie on the Extracellular side of the membrane; the sequence is FLAVGHSWELGTTFCKL. The cysteines at positions 104 and 182 are disulfide-linked. A helical transmembrane segment spans residues 107 to 127; sequence HSSIFFLNMFASGFLLSAISL. Topologically, residues 128-146 are cytoplasmic; that stretch reads DRCLQVVRPVWAQNHRTVA. The chain crosses the membrane as a helical span at residues 147-168; that stretch reads AAHKVCLVLWALAVLNTVPYFV. Topologically, residues 169-210 are extracellular; the sequence is FRDTISRLDGRIMCYYNVLLLNPGPDRDATCNSRQVALAVSK. Residues 211–231 form a helical membrane-spanning segment; sequence FLLAFLVPLAIIASSHAAVSL. At 232 to 247 the chain is on the cytoplasmic side; that stretch reads RLQHRGRRRPGRFVRL. A helical membrane pass occupies residues 248 to 269; sequence VAAVVAAFALCWGPYHVFSLLE. Residues 270–288 are Extracellular-facing; that stretch reads ARAHANPGLRPLVWRGLPF. The chain crosses the membrane as a helical span at residues 289–308; sequence VTSLAFFNSVANPVLYVLTC. Topologically, residues 309–395 are cytoplasmic; sequence PDMLRKLRRS…LNRALSSTSS (87 aa). The Involved in the recycling of CRTH2 motif lies at 330-333; the sequence is DSEL. A phosphoserine mark is found at Ser331 and Ser345. Positions 333-363 are disordered; it reads LGGAGSSRRRRTSSTARSASPLALCSRPEEP.

The protein belongs to the G-protein coupled receptor 1 family. In terms of processing, phosphorylated. As to expression, widespread expression. High expression in stomach, small intestine, heart and thymus. Intermediate expression in colon, spinal cord and peripheral blood and low expression in brain, skeletal muscle and spleen. Expressed also on Th2- and Tc2- type cells, eosinophils and basophils.

Its subcellular location is the cell membrane. Its function is as follows. Receptor for prostaglandin D2 (PGD2). Coupled to the G(i)-protein. Receptor activation may result in pertussis toxin-sensitive decreases in cAMP levels and Ca(2+) mobilization. PI3K signaling is also implicated in mediating PTGDR2 effects. PGD2 induced receptor internalization. CRTH2 internalization can be regulated by diverse kinases such as, PKC, PKA, GRK2, GPRK5/GRK5 and GRK6. Receptor activation is responsible, at least in part, in immune regulation and allergic/inflammation responses. The polypeptide is Prostaglandin D2 receptor 2 (PTGDR2) (Homo sapiens (Human)).